We begin with the raw amino-acid sequence, 412 residues long: Multifunctional CCA protein (412 aa).

Residues Gly-8 and Arg-11 each contribute to the ATP site. Gly-8 and Arg-11 together coordinate CTP. Residues Asp-21 and Asp-23 each contribute to the Mg(2+) site. Positions 91, 137, and 140 each coordinate ATP. 3 residues coordinate CTP: Arg-91, Arg-137, and Arg-140. The 102-residue stretch at 228-329 (TGIHTLMTLS…VKLFDSIDAW (102 aa)) folds into the HD domain.

This sequence belongs to the tRNA nucleotidyltransferase/poly(A) polymerase family. Bacterial CCA-adding enzyme type 1 subfamily. In terms of assembly, monomer. Can also form homodimers and oligomers. Mg(2+) serves as cofactor. The cofactor is Ni(2+).

It catalyses the reaction a tRNA precursor + 2 CTP + ATP = a tRNA with a 3' CCA end + 3 diphosphate. The enzyme catalyses a tRNA with a 3' CCA end + 2 CTP + ATP = a tRNA with a 3' CCACCA end + 3 diphosphate. Functionally, catalyzes the addition and repair of the essential 3'-terminal CCA sequence in tRNAs without using a nucleic acid template. Adds these three nucleotides in the order of C, C, and A to the tRNA nucleotide-73, using CTP and ATP as substrates and producing inorganic pyrophosphate. tRNA 3'-terminal CCA addition is required both for tRNA processing and repair. Also involved in tRNA surveillance by mediating tandem CCA addition to generate a CCACCA at the 3' terminus of unstable tRNAs. While stable tRNAs receive only 3'-terminal CCA, unstable tRNAs are marked with CCACCA and rapidly degraded. The polypeptide is Multifunctional CCA protein (Escherichia coli O139:H28 (strain E24377A / ETEC)).